The following is a 598-amino-acid chain: Membrane protein insertase YidC (598 aa).

A helical membrane pass occupies residues 7–27 (NYFIAIALSVLIVLGWQFLYM). The tract at residues 37 to 71 (AQEAQKAQQQTEQVQQPAAGGATPAPASGTAPSGQ) is disordered. Over residues 40–71 (AQKAQQQTEQVQQPAAGGATPAPASGTAPSGQ) the composition is skewed to low complexity. A run of 4 helical transmembrane segments spans residues 373–393 (FFGN…ALFF), 447–467 (WPVA…YITI), 492–512 (LFGL…WPLI), and 538–558 (WMPL…VIYW).

It belongs to the OXA1/ALB3/YidC family. Type 1 subfamily. As to quaternary structure, interacts with the Sec translocase complex via SecD. Specifically interacts with transmembrane segments of nascent integral membrane proteins during membrane integration.

Its subcellular location is the cell inner membrane. Its function is as follows. Required for the insertion and/or proper folding and/or complex formation of integral membrane proteins into the membrane. Involved in integration of membrane proteins that insert both dependently and independently of the Sec translocase complex, as well as at least some lipoproteins. Aids folding of multispanning membrane proteins. This Rhizobium etli (strain CIAT 652) protein is Membrane protein insertase YidC.